The following is a 487-amino-acid chain: GTPase Der (487 aa).

2 EngA-type G domains span residues 3 to 167 (FTLA…EGFA) and 203 to 378 (LQIA…DIWN). GTP contacts are provided by residues 9–16 (GRPNVGKS), 56–60 (DTAGL), 119–122 (NKAE), 209–216 (GRPNAGKS), 256–260 (DTAGM), and 321–324 (NKWD). Residues 379–463 (RRITTARLNS…PIRLTMRGQG (85 aa)) form the KH-like domain. The segment at 459-487 (MRGQGDKNPFKERKFRTPSRLRKHLGKKG) is disordered. Residues 471–487 (RKFRTPSRLRKHLGKKG) are compositionally biased toward basic residues.

This sequence belongs to the TRAFAC class TrmE-Era-EngA-EngB-Septin-like GTPase superfamily. EngA (Der) GTPase family. Associates with the 50S ribosomal subunit.

In terms of biological role, GTPase that plays an essential role in the late steps of ribosome biogenesis. The sequence is that of GTPase Der from Cereibacter sphaeroides (strain ATCC 17025 / ATH 2.4.3) (Rhodobacter sphaeroides).